A 255-amino-acid polypeptide reads, in one-letter code: Imidazole glycerol phosphate synthase subunit HisF (255 aa).

Active-site residues include Asp-12 and Asp-131.

It belongs to the HisA/HisF family. As to quaternary structure, heterodimer of HisH and HisF.

Its subcellular location is the cytoplasm. The catalysed reaction is 5-[(5-phospho-1-deoxy-D-ribulos-1-ylimino)methylamino]-1-(5-phospho-beta-D-ribosyl)imidazole-4-carboxamide + L-glutamine = D-erythro-1-(imidazol-4-yl)glycerol 3-phosphate + 5-amino-1-(5-phospho-beta-D-ribosyl)imidazole-4-carboxamide + L-glutamate + H(+). Its pathway is amino-acid biosynthesis; L-histidine biosynthesis; L-histidine from 5-phospho-alpha-D-ribose 1-diphosphate: step 5/9. In terms of biological role, IGPS catalyzes the conversion of PRFAR and glutamine to IGP, AICAR and glutamate. The HisF subunit catalyzes the cyclization activity that produces IGP and AICAR from PRFAR using the ammonia provided by the HisH subunit. This is Imidazole glycerol phosphate synthase subunit HisF from Vesicomyosocius okutanii subsp. Calyptogena okutanii (strain HA).